The sequence spans 280 residues: 2-dehydro-3-deoxyphosphooctonate aldolase (280 aa).

It belongs to the KdsA family.

The protein resides in the cytoplasm. It catalyses the reaction D-arabinose 5-phosphate + phosphoenolpyruvate + H2O = 3-deoxy-alpha-D-manno-2-octulosonate-8-phosphate + phosphate. The protein operates within carbohydrate biosynthesis; 3-deoxy-D-manno-octulosonate biosynthesis; 3-deoxy-D-manno-octulosonate from D-ribulose 5-phosphate: step 2/3. It participates in bacterial outer membrane biogenesis; lipopolysaccharide biosynthesis. The sequence is that of 2-dehydro-3-deoxyphosphooctonate aldolase from Pseudomonas putida (strain W619).